We begin with the raw amino-acid sequence, 529 residues long: Corneodesmosin (529 aa).

Positions 1–32 (MGSSRAPWMGRVGGHGMMALLLAGLLLPGTLA) are cleaved as a signal peptide. 2 disordered regions span residues 38–248 (FSDP…SVSG) and 383–492 (GSTG…SSAG). 6 stretches are compositionally biased toward low complexity: residues 58–83 (GKGDSSGFSSYSGSSSSGSSISSARS), 90–100 (GSSSGSSIAQG), 111–175 (GYSQ…NGSA), 189–231 (PSQP…SGGP), 392–408 (SPSSSRVPSSSSISSSS), and 426–441 (PGTGSFSSSSSSQSSG). A glycan (N-linked (GlcNAc...) asparagine) is linked at Asn-172. Polar residues predominate over residues 449-467 (GSKSSSSGHPCMSVSSLTL).

In terms of tissue distribution, exclusively expressed in skin.

It is found in the secreted. Its function is as follows. Important for the epidermal barrier integrity. The protein is Corneodesmosin (CDSN) of Homo sapiens (Human).